The primary structure comprises 150 residues: MIRILGEGKGSKLLENLKEKLEEIVKKEIGDVHVNVILVSEDEIKELNQQFRGQDLPTDVLTFPLMEEDVYGEIYVCPLIVEENAREFNNTFEKELLEVVIHGILHLAGYDHEFEDRNSKEMFEKQKKYVEEVWGEWRSNPSEDSDPGKR.

3 residues coordinate Zn(2+): His102, His106, and His112.

The protein belongs to the endoribonuclease YbeY family. Zn(2+) is required as a cofactor.

The protein localises to the cytoplasm. Single strand-specific metallo-endoribonuclease involved in late-stage 70S ribosome quality control and in maturation of the 3' terminus of the 16S rRNA. The chain is Endoribonuclease YbeY from Thermotoga sp. (strain RQ2).